Reading from the N-terminus, the 372-residue chain is Fatty acid 2-hydroxylase (372 aa).

Residues 8-86 (AASFSPSEVQ…LEQYYVGELR (79 aa)) enclose the Cytochrome b5 heme-binding domain. Residues H43 and H69 each contribute to the heme site. 2 consecutive transmembrane segments (helical) span residues 168 to 188 (VWYS…WSYY) and 213 to 233 (SMFP…EYLI). The 143-residue stretch at 219 to 361 (FMLGIFLWSL…TKLWDYCFHT (143 aa)) folds into the Fatty acid hydroxylase domain. Residues H234, H239, H257, H260, and H261 each coordinate Zn(2+). The next 2 membrane-spanning stretches (helical) occupy residues 271-291 (VFPP…LQLI) and 292-312 (LPEA…VLYD). Positions 315, 319, 336, 339, and 340 each coordinate Zn(2+).

It belongs to the sterol desaturase family. SCS7 subfamily. Zn(2+) is required as a cofactor.

It is found in the endoplasmic reticulum membrane. The protein localises to the microsome membrane. The catalysed reaction is a 1,2-saturated fatty acid + 2 Fe(II)-[cytochrome b5] + O2 + 2 H(+) = a (R)-2-hydroxy fatty acid + 2 Fe(III)-[cytochrome b5] + H2O. It carries out the reaction hexadecanoate + 2 Fe(II)-[cytochrome b5] + O2 + 2 H(+) = (R)-2-hydroxyhexadecanoate + 2 Fe(III)-[cytochrome b5] + H2O. The enzyme catalyses octadecanoate + 2 Fe(II)-[cytochrome b5] + O2 + 2 H(+) = (R)-2-hydroxyoctadecanoate + 2 Fe(III)-[cytochrome b5] + H2O. It catalyses the reaction docosanoate + 2 Fe(II)-[cytochrome b5] + O2 + 2 H(+) = 2-hydroxydocosanoate + 2 Fe(III)-[cytochrome b5] + H2O. The catalysed reaction is tetracosanoate + 2 Fe(II)-[cytochrome b5] + O2 + 2 H(+) = (R)-2-hydroxytetracosanoate + 2 Fe(III)-[cytochrome b5] + H2O. It functions in the pathway lipid metabolism; fatty acid metabolism. The protein operates within sphingolipid metabolism; galactosylceramide biosynthesis. In terms of biological role, catalyzes the hydroxylation of free fatty acids at the C-2 position to produce 2-hydroxy fatty acids, which are building blocks of sphingolipids and glycosphingolipids common in neural tissue and epidermis. FA2H is stereospecific for the production of (R)-2-hydroxy fatty acids. Plays an essential role in the synthesis of galactosphingolipids of the myelin sheath. Responsible for the synthesis of sphingolipids and glycosphingolipids involved in the formation of epidermal lamellar bodies critical for skin permeability barrier. Participates in the synthesis of glycosphingolipids and a fraction of type II wax diesters in sebaceous gland, specifically regulating hair follicle homeostasis. Involved in the synthesis of sphingolipids of plasma membrane rafts, controlling lipid raft mobility and trafficking of raft-associated proteins. The chain is Fatty acid 2-hydroxylase (FA2H) from Macaca fascicularis (Crab-eating macaque).